Consider the following 399-residue polypeptide: CCA-adding enzyme (399 aa).

G33 and R36 together coordinate ATP. CTP-binding residues include G33 and R36. The Mg(2+) site is built by D46 and D48. Residues R117, D160, R163, R166, and R169 each coordinate ATP. R117, D160, R163, R166, and R169 together coordinate CTP.

This sequence belongs to the tRNA nucleotidyltransferase/poly(A) polymerase family. Bacterial CCA-adding enzyme type 3 subfamily. In terms of assembly, homodimer. Requires Mg(2+) as cofactor.

The enzyme catalyses a tRNA precursor + 2 CTP + ATP = a tRNA with a 3' CCA end + 3 diphosphate. It catalyses the reaction a tRNA with a 3' CCA end + 2 CTP + ATP = a tRNA with a 3' CCACCA end + 3 diphosphate. Catalyzes the addition and repair of the essential 3'-terminal CCA sequence in tRNAs without using a nucleic acid template. Adds these three nucleotides in the order of C, C, and A to the tRNA nucleotide-73, using CTP and ATP as substrates and producing inorganic pyrophosphate. tRNA 3'-terminal CCA addition is required both for tRNA processing and repair. Also involved in tRNA surveillance by mediating tandem CCA addition to generate a CCACCA at the 3' terminus of unstable tRNAs. While stable tRNAs receive only 3'-terminal CCA, unstable tRNAs are marked with CCACCA and rapidly degraded. The sequence is that of CCA-adding enzyme from Lactobacillus helveticus (strain DPC 4571).